The chain runs to 222 residues: Peptide methionine sulfoxide reductase MsrA 2 (222 aa).

C56 is a catalytic residue.

Belongs to the MsrA Met sulfoxide reductase family.

It catalyses the reaction L-methionyl-[protein] + [thioredoxin]-disulfide + H2O = L-methionyl-(S)-S-oxide-[protein] + [thioredoxin]-dithiol. The catalysed reaction is [thioredoxin]-disulfide + L-methionine + H2O = L-methionine (S)-S-oxide + [thioredoxin]-dithiol. Its function is as follows. Has an important function as a repair enzyme for proteins that have been inactivated by oxidation. Catalyzes the reversible oxidation-reduction of methionine sulfoxide in proteins to methionine. The sequence is that of Peptide methionine sulfoxide reductase MsrA 2 (msrA2) from Nostoc sp. (strain PCC 7120 / SAG 25.82 / UTEX 2576).